Reading from the N-terminus, the 278-residue chain is Bis(5'-nucleosyl)-tetraphosphatase, symmetrical (278 aa).

This sequence belongs to the Ap4A hydrolase family.

It carries out the reaction P(1),P(4)-bis(5'-adenosyl) tetraphosphate + H2O = 2 ADP + 2 H(+). In terms of biological role, hydrolyzes diadenosine 5',5'''-P1,P4-tetraphosphate to yield ADP. The sequence is that of Bis(5'-nucleosyl)-tetraphosphatase, symmetrical from Buchnera aphidicola subsp. Baizongia pistaciae (strain Bp).